The sequence spans 288 residues: Quinate/shikimate dehydrogenase (288 aa).

Substrate-binding residues include lysine 71 and aspartate 107. NAD(+) is bound by residues 132 to 135 (AGGA), 155 to 158 (NRRD), lysine 205, 232 to 235 (CVYN), and glycine 255.

It belongs to the shikimate dehydrogenase family. In terms of assembly, homodimer.

It carries out the reaction L-quinate + NAD(+) = 3-dehydroquinate + NADH + H(+). It catalyses the reaction L-quinate + NADP(+) = 3-dehydroquinate + NADPH + H(+). The catalysed reaction is shikimate + NADP(+) = 3-dehydroshikimate + NADPH + H(+). The enzyme catalyses shikimate + NAD(+) = 3-dehydroshikimate + NADH + H(+). It participates in metabolic intermediate biosynthesis; chorismate biosynthesis; chorismate from D-erythrose 4-phosphate and phosphoenolpyruvate: step 4/7. The actual biological function of YdiB remains unclear, nor is it known whether 3-dehydroshikimate or quinate represents the natural substrate. Catalyzes the reversible NAD-dependent reduction of both 3-dehydroshikimate (DHSA) and 3-dehydroquinate to yield shikimate (SA) and quinate, respectively. It can use both NAD or NADP for catalysis, however it has higher catalytic efficiency with NAD. The chain is Quinate/shikimate dehydrogenase from Escherichia coli O7:K1 (strain IAI39 / ExPEC).